Consider the following 1563-residue polypeptide: DNA-directed RNA polymerase subunit beta' (1563 aa).

Zn(2+) is bound by residues C61, C63, C76, and C79. Residues D588, D590, and D592 each coordinate Mg(2+). Zn(2+) is bound by residues C925, C999, C1006, and C1009.

The protein belongs to the RNA polymerase beta' chain family. As to quaternary structure, the RNAP catalytic core consists of 2 alpha, 1 beta, 1 beta' and 1 omega subunit. When a sigma factor is associated with the core the holoenzyme is formed, which can initiate transcription. Mg(2+) is required as a cofactor. The cofactor is Zn(2+).

It carries out the reaction RNA(n) + a ribonucleoside 5'-triphosphate = RNA(n+1) + diphosphate. In terms of biological role, DNA-dependent RNA polymerase catalyzes the transcription of DNA into RNA using the four ribonucleoside triphosphates as substrates. The chain is DNA-directed RNA polymerase subunit beta' from Hydrogenobaculum sp. (strain Y04AAS1).